Consider the following 296-residue polypeptide: MPELPEVETVKRGLAPAMEGARVARLELRRQDLRFPFPEALADRVSGRTIVGLGRRAKYLLVDLDDGNTLVSHLGMSGSFRIEEGAASAMPGEFHHARTKDEKHDHVVFHLEGQGGPRRVVYNDPRRFGFMDMVRRADLAAHPFFRDLGPEPTGNDLGAAYLAERFRDKAQPLKSALLDQKNIAGLGNIYVCEALWRSHLSPIRAAGTLVTPGGKPKEKLGLLVASIRDVIADAIAAGGSSLRDHIQTDGSLGYFQHSFSVYDREGQACGTPGCGGTVARIVQAGRSTFYCAACQK.

P2 (schiff-base intermediate with DNA) is an active-site residue. Catalysis depends on E3, which acts as the Proton donor. The active-site Proton donor; for beta-elimination activity is the K58. 3 residues coordinate DNA: H104, R126, and K169. The FPG-type zinc-finger motif lies at 260–296 (SVYDREGQACGTPGCGGTVARIVQAGRSTFYCAACQK). The active-site Proton donor; for delta-elimination activity is the R286.

It belongs to the FPG family. Monomer. Zn(2+) serves as cofactor.

It carries out the reaction Hydrolysis of DNA containing ring-opened 7-methylguanine residues, releasing 2,6-diamino-4-hydroxy-5-(N-methyl)formamidopyrimidine.. The enzyme catalyses 2'-deoxyribonucleotide-(2'-deoxyribose 5'-phosphate)-2'-deoxyribonucleotide-DNA = a 3'-end 2'-deoxyribonucleotide-(2,3-dehydro-2,3-deoxyribose 5'-phosphate)-DNA + a 5'-end 5'-phospho-2'-deoxyribonucleoside-DNA + H(+). Involved in base excision repair of DNA damaged by oxidation or by mutagenic agents. Acts as a DNA glycosylase that recognizes and removes damaged bases. Has a preference for oxidized purines, such as 7,8-dihydro-8-oxoguanine (8-oxoG). Has AP (apurinic/apyrimidinic) lyase activity and introduces nicks in the DNA strand. Cleaves the DNA backbone by beta-delta elimination to generate a single-strand break at the site of the removed base with both 3'- and 5'-phosphates. In Rhizobium etli (strain CIAT 652), this protein is Formamidopyrimidine-DNA glycosylase.